The sequence spans 618 residues: Probable arginine--tRNA ligase, cytoplasmic (618 aa).

2 interaction with tRNA regions span residues 60–61 (ET) and 104–109 (NGIFLR). Residues 146 to 151 (EFSSPN), His160, Tyr359, Asp363, and Gln387 each bind L-arginine. A 'HIGH' region motif is present at residues 149–160 (SPNIAKPFHAGH). Positions 496-510 (DTGPYLQYAHSRLSS) are interaction with tRNA.

Belongs to the class-I aminoacyl-tRNA synthetase family.

It is found in the cytoplasm. The catalysed reaction is tRNA(Arg) + L-arginine + ATP = L-arginyl-tRNA(Arg) + AMP + diphosphate. Functionally, forms part of a macromolecular complex that catalyzes the attachment of specific amino acids to cognate tRNAs during protein synthesis. In Schizosaccharomyces pombe (strain 972 / ATCC 24843) (Fission yeast), this protein is Probable arginine--tRNA ligase, cytoplasmic (mrs1).